The following is a 210-amino-acid chain: Thymidylate kinase (210 aa).

9–16 (GLEGAGKS) contributes to the ATP binding site.

This sequence belongs to the thymidylate kinase family.

It carries out the reaction dTMP + ATP = dTDP + ADP. In terms of biological role, phosphorylation of dTMP to form dTDP in both de novo and salvage pathways of dTTP synthesis. The chain is Thymidylate kinase from Aliivibrio salmonicida (strain LFI1238) (Vibrio salmonicida (strain LFI1238)).